The chain runs to 416 residues: MQPRRPDRFDGLEYRGTSWGRGDGDVPPYQHGFPARSFSSSGDLSQHWVTTPPDIPGSRNLHWGEKSPQYGADSNAGPAAVGEESSSSSSGGEHLNRFAGFGIGLASLFTENVLAHPCIVLRRQCQVNYHARNYQLSPFSIVNIMYSFTKTQGFRALWKGMGSTFIVQGISLGAEGMLSEFTHLPRELNHKWNPKQIGGHLLLKGLVYVIVTPFYSASLIETVQSEIIHDNPGILDCLKEGIGRVLNLGVPYSKRLLPLLVLTFPTVLHGILHYIISSTIQKCVLFFIKKKSPAQLPGDGSNAVQNKLEDYFPELIANFAASLCADVLLYPLETVLHRLHIQGTRTIIDNTDLGHEVVPINSQYEGLKDCINTIKREEGGLGFYKGFGAVVVQYTLHAIVLQITKIIYSSVVQTAS.

A compositionally biased stretch (basic and acidic residues) spans 1 to 13; the sequence is MQPRRPDRFDGLE. A disordered region spans residues 1-91; sequence MQPRRPDRFD…GEESSSSSSG (91 aa). The segment covering 37 to 49 has biased composition (polar residues); that stretch reads SFSSSGDLSQHWV. Low complexity predominate over residues 82–91; sequence GEESSSSSSG. One copy of the Solcar 1 repeat lies at 94–185; that stretch reads HLNRFAGFGI…GMLSEFTHLP (92 aa). 6 helical membrane passes run 101-121, 161-181, 197-217, 256-276, 312-332, and 381-401; these read FGIGLASLFTENVLAHPCIVL, MGSTFIVQGISLGAEGMLSEF, IGGHLLLKGLVYVIVTPFYSA, LLPLLVLTFPTVLHGILHYII, FPELIANFAASLCADVLLYPL, and LGFYKGFGAVVVQYTLHAIVL. The stretch at 309–414 is one Solcar 2 repeat; the sequence is EDYFPELIAN…KIIYSSVVQT (106 aa).

Belongs to the mitochondrial carrier (TC 2.A.29) family.

Its subcellular location is the mitochondrion outer membrane. May play a role in mitochondrial dynamics by controlling mitochondrial membrane fission. In Xenopus tropicalis (Western clawed frog), this protein is Solute carrier family 25 member 46 (slc25a46).